A 565-amino-acid chain; its full sequence is Proline--tRNA ligase (565 aa).

This sequence belongs to the class-II aminoacyl-tRNA synthetase family. ProS type 1 subfamily. As to quaternary structure, homodimer.

It is found in the cytoplasm. The catalysed reaction is tRNA(Pro) + L-proline + ATP = L-prolyl-tRNA(Pro) + AMP + diphosphate. Its function is as follows. Catalyzes the attachment of proline to tRNA(Pro) in a two-step reaction: proline is first activated by ATP to form Pro-AMP and then transferred to the acceptor end of tRNA(Pro). As ProRS can inadvertently accommodate and process non-cognate amino acids such as alanine and cysteine, to avoid such errors it has two additional distinct editing activities against alanine. One activity is designated as 'pretransfer' editing and involves the tRNA(Pro)-independent hydrolysis of activated Ala-AMP. The other activity is designated 'posttransfer' editing and involves deacylation of mischarged Ala-tRNA(Pro). The misacylated Cys-tRNA(Pro) is not edited by ProRS. The sequence is that of Proline--tRNA ligase from Francisella tularensis subsp. mediasiatica (strain FSC147).